A 212-amino-acid polypeptide reads, in one-letter code: LexA repressor (212 aa).

The H-T-H motif DNA-binding region spans Val26–Asp46. Active-site for autocatalytic cleavage activity residues include Ser128 and Lys171.

Belongs to the peptidase S24 family. Homodimer.

The enzyme catalyses Hydrolysis of Ala-|-Gly bond in repressor LexA.. Represses a number of genes involved in the response to DNA damage (SOS response), including recA and lexA. In the presence of single-stranded DNA, RecA interacts with LexA causing an autocatalytic cleavage which disrupts the DNA-binding part of LexA, leading to derepression of the SOS regulon and eventually DNA repair. The sequence is that of LexA repressor from Oenococcus oeni (strain ATCC BAA-331 / PSU-1).